Here is a 166-residue protein sequence, read N- to C-terminus: NAD(P)H-quinone oxidoreductase subunit I, chloroplastic (166 aa).

2 consecutive 4Fe-4S ferredoxin-type domains span residues 55–84 and 95–124; these read GRIH…VDWK and LNYS…MTEE. 8 residues coordinate [4Fe-4S] cluster: Cys64, Cys67, Cys70, Cys74, Cys104, Cys107, Cys110, and Cys114.

The protein belongs to the complex I 23 kDa subunit family. As to quaternary structure, NDH is composed of at least 16 different subunits, 5 of which are encoded in the nucleus. The cofactor is [4Fe-4S] cluster.

It is found in the plastid. The protein localises to the chloroplast thylakoid membrane. It carries out the reaction a plastoquinone + NADH + (n+1) H(+)(in) = a plastoquinol + NAD(+) + n H(+)(out). The enzyme catalyses a plastoquinone + NADPH + (n+1) H(+)(in) = a plastoquinol + NADP(+) + n H(+)(out). NDH shuttles electrons from NAD(P)H:plastoquinone, via FMN and iron-sulfur (Fe-S) centers, to quinones in the photosynthetic chain and possibly in a chloroplast respiratory chain. The immediate electron acceptor for the enzyme in this species is believed to be plastoquinone. Couples the redox reaction to proton translocation, and thus conserves the redox energy in a proton gradient. The protein is NAD(P)H-quinone oxidoreductase subunit I, chloroplastic of Lactuca sativa (Garden lettuce).